The sequence spans 273 residues: Undecaprenyl-diphosphatase (273 aa).

7 consecutive transmembrane segments (helical) span residues 6–26 (SLLV…LPVS), 45–65 (AKTF…VMFW), 90–110 (LTLI…LLFH), 116–136 (LFNP…LIAA), 190–210 (YAAS…ATAL), 222–242 (GDIP…LVAI), and 252–272 (ISFI…YVVF).

Belongs to the UppP family.

The protein resides in the cell inner membrane. It catalyses the reaction di-trans,octa-cis-undecaprenyl diphosphate + H2O = di-trans,octa-cis-undecaprenyl phosphate + phosphate + H(+). Its function is as follows. Catalyzes the dephosphorylation of undecaprenyl diphosphate (UPP). Confers resistance to bacitracin. The chain is Undecaprenyl-diphosphatase from Escherichia fergusonii (strain ATCC 35469 / DSM 13698 / CCUG 18766 / IAM 14443 / JCM 21226 / LMG 7866 / NBRC 102419 / NCTC 12128 / CDC 0568-73).